Consider the following 131-residue polypeptide: VAICSPLLYSTVMTKRVCMQLVVGSYMGGLLNSLTHTCGLLGLPFCGPNVINHYFCDIPPLLQLACSDTHRNETLLLAFSAVIALFTLFVITASYMLILSVILKIQSDDGRKKTFHTCASHLTAITIFFGS.

Over 1–16 (VAICSPLLYSTVMTKR) the chain is Cytoplasmic. The chain crosses the membrane as a helical span at residues 17–41 (VCMQLVVGSYMGGLLNSLTHTCGLL). Topologically, residues 42-82 (GLPFCGPNVINHYFCDIPPLLQLACSDTHRNETLLLAFSAV) are extracellular. N-linked (GlcNAc...) asparagine glycosylation occurs at Asn72. Residues 83–103 (IALFTLFVITASYMLILSVIL) traverse the membrane as a helical segment. Over 104 to 116 (KIQSDDGRKKTFH) the chain is Cytoplasmic. The chain crosses the membrane as a helical span at residues 117-131 (TCASHLTAITIFFGS).

This sequence belongs to the G-protein coupled receptor 1 family.

Its subcellular location is the cell membrane. Odorant receptor. This chain is Olfactory receptor-like protein COR9 (COR9), found in Gallus gallus (Chicken).